A 507-amino-acid polypeptide reads, in one-letter code: Cytochrome P450 monooxygenase nodZ (507 aa).

The next 2 helical transmembrane spans lie at 1–21 and 205–225; these read MITA…FSLL and GFLH…PWFL. A glycan (N-linked (GlcNAc...) asparagine) is linked at asparagine 352. Residue cysteine 445 coordinates heme.

The protein belongs to the cytochrome P450 family. It depends on heme as a cofactor.

The protein localises to the membrane. Its pathway is secondary metabolite biosynthesis. Functionally, cytochrome P450 monooxygenase; part of the gene cluster that mediates the biosynthesis of the indole diterpenes nodulisporic acids (NA). Nodulisporic acid A (NAA) and its chemically modified derivatives are of particular significance because of their highly potent insecticidal activity against blood-feeding arthropods and lack of observable adverse effects on mammals, in particular the tremogenicity associated with the paspaline-derived IDTs is not observed. The geranylgeranyl diphosphate (GGPP) synthase ggs1, localized outside of the cluster, is proposed to catalyze the first step in nodulisporic acid biosynthesis via conversion of farnesyl pyrophosphate and isopentyl pyrophosphate into geranylgeranyl pyrophosphate (GGPP). Condensation of indole-3-glycerol phosphate with GGPP by the prenyl transferase nodC then forms 3-geranylgeranylindole (3-GGI). Epoxidation by the FAD-dependent monooxygenase nodM leads to a single-epoxidized-GGI that is substrate of the terpene cyclase nodB for cyclization to yield emindole SB. The terminal methyl carbon, C28, of emindole SB is then oxidized by the cytochrome P450 monooxygenase nodW to produce nodulisporic acid F (NAF), the pentacyclic core of NAA. NAF is converted to nodulisporic acid E (NAE) via prenylation. This step is probably performed by one of the indole diterpene prenyltransferases nodD1 or nodD2. Several oxidation steps performed by the FAD-linked oxidoreductase nodO and one of the cytochrome P450 monooxygenase nodR, nodX or nodZ further convert NAE to nodulisporic acid D (NAD). NAD is substrate of cytochrome P450 monooxygenase nodJ to produce the precursor of nodulisporic acid C (NAC), converted to NAC by one of the indole diterpene prenyltransferases nodD1 or nodD2. The FAD-dependent monooxygenase nodY2 then oxidizes NAC to nodulisporic acid B (NAB). Finally NAB is converted to NAA by one of the cytochrome P450 monooxygenases nodR, nodX or nodZ. This is Cytochrome P450 monooxygenase nodZ from Hypoxylon pulicicidum.